A 191-amino-acid polypeptide reads, in one-letter code: RNA pyrophosphohydrolase (191 aa).

Positions 6–149 constitute a Nudix hydrolase domain; that stretch reads GYRLNVGIIL…KREVYRQALS (144 aa). The short motif at 38-59 is the Nudix box element; that stretch reads GGIKVDEDPDAAMFRELYEEVG. The segment at 162-191 is disordered; sequence GAQAVSDAGGTATRQIPVATEPSGPSSSQR.

Belongs to the Nudix hydrolase family. RppH subfamily. It depends on a divalent metal cation as a cofactor.

Its function is as follows. Accelerates the degradation of transcripts by removing pyrophosphate from the 5'-end of triphosphorylated RNA, leading to a more labile monophosphorylated state that can stimulate subsequent ribonuclease cleavage. This chain is RNA pyrophosphohydrolase, found in Methylococcus capsulatus (strain ATCC 33009 / NCIMB 11132 / Bath).